A 194-amino-acid chain; its full sequence is Large ribosomal subunit protein bL9 (194 aa).

Positions 166 to 184 are enriched in low complexity; that stretch reads AENQAQADEQAGELAAAAA. The tract at residues 166–194 is disordered; the sequence is AENQAQADEQAGELAAAAAERGDMGGDEE. Residues 185-194 are compositionally biased toward basic and acidic residues; that stretch reads ERGDMGGDEE.

It belongs to the bacterial ribosomal protein bL9 family.

Functionally, binds to the 23S rRNA. The protein is Large ribosomal subunit protein bL9 of Hyphomonas neptunium (strain ATCC 15444).